Consider the following 261-residue polypeptide: RNA-binding protein 1 (261 aa).

Disordered stretches follow at residues 1 to 38 and 232 to 261; these read MADGYWNRQQSLLPHSGLHKRPRPDYEMPASGLPSGNE and QFSRYPGPRSGGGPRSSGPPRGGHGSRGRR. The region spanning 151 to 236 is the RRM domain; that stretch reads PTLYIEGLPS…SHLRLQFSRY (86 aa). Over residues 240 to 254 the composition is skewed to gly residues; it reads RSGGGPRSSGPPRGG.

Ubiquitous.

The protein localises to the nucleus speckle. It is found in the cytoplasmic granule. In terms of biological role, RNA-binding protein interacting with the enod40 RNA. The chain is RNA-binding protein 1 from Medicago truncatula (Barrel medic).